A 90-amino-acid polypeptide reads, in one-letter code: Probable Fe(2+)-trafficking protein (90 aa).

The protein belongs to the Fe(2+)-trafficking protein family.

In terms of biological role, could be a mediator in iron transactions between iron acquisition and iron-requiring processes, such as synthesis and/or repair of Fe-S clusters in biosynthetic enzymes. The polypeptide is Probable Fe(2+)-trafficking protein (Vibrio campbellii (strain ATCC BAA-1116)).